The chain runs to 292 residues: Galactinol synthase 2 (292 aa).

The active site involves K65. Residues D81, D83, and H218 each contribute to the Mn(2+) site.

Belongs to the glycosyltransferase 8 family. Galactosyltransferase subfamily. The cofactor is a divalent metal cation. Present in phloem-associated intermediary cells. Weakly expressed in leaves.

The protein localises to the cytoplasm. The catalysed reaction is myo-inositol + UDP-alpha-D-galactose = alpha-D-galactosyl-(1-&gt;3)-1D-myo-inositol + UDP + H(+). In terms of biological role, may promote plant stress tolerance. Galactinol synthase mainly involved in the biosynthesis of transport raffinose family oligosaccharides (RFOs) that function as osmoprotectants. The protein is Galactinol synthase 2 (GOLS2) of Ajuga reptans (Bugle).